Consider the following 257-residue polypeptide: MSDALIRLDQVGVTFGGEAVLDSIDLSVAPGQIVTLIGPNGAGKTTLVRAVLGLLKPHRGKVWRKPKLRIGYMPQKIQVDATLPLSVLRFLRLVPGVDRAAALSALQEVGAEQVIDSPIQTISGGEMQRVLLARALLREPQLLVLDEPVQGVDVVGQTELYNLITRLRDRHGCGVLMVSHDLHLVMSATDQVVCLNRHVCCSGHPEQVSGDPAFVELFGKTAPSLAIYHHHHDHSHDLHGSVVAPGTHVHGEHCKHG.

The region spanning 6-221 (IRLDQVGVTF…PAFVELFGKT (216 aa)) is the ABC transporter domain. Residue 38-45 (GPNGAGKT) coordinates ATP.

It belongs to the ABC transporter superfamily. Zinc importer (TC 3.A.1.15.5) family. As to quaternary structure, the complex is composed of two ATP-binding proteins (ZnuC), two transmembrane proteins (ZnuB) and a solute-binding protein (ZnuA).

The protein localises to the cell inner membrane. It carries out the reaction Zn(2+)(out) + ATP(in) + H2O(in) = Zn(2+)(in) + ADP(in) + phosphate(in) + H(+)(in). In terms of biological role, part of the ABC transporter complex ZnuABC involved in zinc import. Responsible for energy coupling to the transport system. In Pseudomonas putida (strain ATCC 47054 / DSM 6125 / CFBP 8728 / NCIMB 11950 / KT2440), this protein is Zinc import ATP-binding protein ZnuC.